The following is a 186-amino-acid chain: Protein Syd (186 aa).

The protein belongs to the Syd family.

The protein resides in the cell inner membrane. Its function is as follows. Interacts with the SecY protein in vivo. May bind preferentially to an uncomplexed state of SecY, thus functioning either as a chelating agent for excess SecY in the cell or as a regulatory factor that negatively controls the translocase function. The chain is Protein Syd from Erwinia tasmaniensis (strain DSM 17950 / CFBP 7177 / CIP 109463 / NCPPB 4357 / Et1/99).